Consider the following 412-residue polypeptide: Regulator of microtubule dynamics protein 2 (412 aa).

The helical transmembrane segment at 9–28 (LLLGIMAGTAGISLLVLWYH) threads the bilayer. Ser51 is modified (phosphoserine). A coiled-coil region spans residues 72–110 (QLQILEKLNELLTNVEELKEEIKFLKETIPKLEECIQDE). Ser121 carries the post-translational modification Phosphoserine. Positions 122-153 (PQHRARKKKTTTTTVQRPATSNSSEEAESEGG) are disordered. Thr141 is subject to Phosphothreonine. Tyr154 bears the Phosphotyrosine mark. A phosphothreonine mark is found at Thr156 and Thr159.

Belongs to the RMDN family. In terms of assembly, interacts with microtubules.

Its subcellular location is the membrane. The protein localises to the cytoplasm. It localises to the cytoskeleton. The protein resides in the spindle. It is found in the spindle pole. The polypeptide is Regulator of microtubule dynamics protein 2 (Rmdn2) (Rattus norvegicus (Rat)).